We begin with the raw amino-acid sequence, 263 residues long: Phosphatidylglycerol--prolipoprotein diacylglyceryl transferase (263 aa).

The next 4 membrane-spanning stretches (helical) occupy residues 15 to 35 (ISIHWYAICIVSGLLLAVYLA), 52 to 72 (FILLAFPIAIVGARLYYVIFQ), 83 to 103 (IFAIWNGGIAIYGGLIAGAAV), and 112 to 132 (AIAVLDFLDIAAPGVMIAQSI). R134 is an a 1,2-diacyl-sn-glycero-3-phospho-(1'-sn-glycerol) binding site. The next 3 helical transmembrane spans lie at 170 to 190 (VPTFLYESLWNLVGFSIILGL), 200 to 220 (GDVTSFYLIWYGLGRFVIEGM), and 227 to 247 (FVGLRVSQWVSISIIILGAVL).

This sequence belongs to the Lgt family.

It is found in the cell membrane. It carries out the reaction L-cysteinyl-[prolipoprotein] + a 1,2-diacyl-sn-glycero-3-phospho-(1'-sn-glycerol) = an S-1,2-diacyl-sn-glyceryl-L-cysteinyl-[prolipoprotein] + sn-glycerol 1-phosphate + H(+). The protein operates within protein modification; lipoprotein biosynthesis (diacylglyceryl transfer). In terms of biological role, catalyzes the transfer of the diacylglyceryl group from phosphatidylglycerol to the sulfhydryl group of the N-terminal cysteine of a prolipoprotein, the first step in the formation of mature lipoproteins. The protein is Phosphatidylglycerol--prolipoprotein diacylglyceryl transferase of Streptococcus thermophilus (strain ATCC BAA-491 / LMD-9).